The following is a 131-amino-acid chain: Protein SOB FIVE-LIKE 4 (131 aa).

Disordered stretches follow at residues 1 to 21 (MDKE…SSPI) and 40 to 131 (IYNY…YRMK). The segment covering 8–18 (SSESGWTTYLS) has biased composition (polar residues). The SOFL-A signature appears at 11–16 (SGWTTY). A compositionally biased stretch (basic and acidic residues) spans 46–58 (KVEHEEERNKDSD). The short motif at 60–69 (SMASDASSGP) is the SOFL-B element. Over residues 79–109 (KALDLKNGKNEGNSKSKNDDDHHNHYHDGKK) the composition is skewed to basic and acidic residues. The Nuclear localization signal motif lies at 107–114 (GKKTSNSY). The span at 114 to 131 (YRKKDKKKRENKSTYRMK) shows a compositional bias: basic residues.

Belongs to the SOFL plant protein family. In terms of tissue distribution, expressed, at low levels, in seedlings, roots, flowers and siliques.

It is found in the cytoplasm. The protein resides in the nucleus. Involved in cytokinin-mediated development. This is Protein SOB FIVE-LIKE 4 from Arabidopsis thaliana (Mouse-ear cress).